The following is a 433-amino-acid chain: L-2-hydroxyglutarate dehydrogenase, mitochondrial (433 aa).

The protein belongs to the L2HGDH family. The cofactor is FAD.

The protein resides in the mitochondrion. The enzyme catalyses (S)-2-hydroxyglutarate + A = 2-oxoglutarate + AH2. This chain is L-2-hydroxyglutarate dehydrogenase, mitochondrial, found in Caenorhabditis elegans.